The following is a 233-amino-acid chain: Large ribosomal subunit protein uL1 (233 aa).

The protein belongs to the universal ribosomal protein uL1 family. Part of the 50S ribosomal subunit.

In terms of biological role, binds directly to 23S rRNA. The L1 stalk is quite mobile in the ribosome, and is involved in E site tRNA release. Functionally, protein L1 is also a translational repressor protein, it controls the translation of the L11 operon by binding to its mRNA. The chain is Large ribosomal subunit protein uL1 from Rhizobium etli (strain ATCC 51251 / DSM 11541 / JCM 21823 / NBRC 15573 / CFN 42).